The following is a 329-amino-acid chain: MYG1 protein (329 aa).

This sequence belongs to the MYG1 family.

In Dictyostelium discoideum (Social amoeba), this protein is MYG1 protein.